The following is a 442-amino-acid chain: Cyclic AMP receptor-like protein B (442 aa).

Topologically, residues 1–16 (MGGDIHLCSMILGKNH) are extracellular. The helical transmembrane segment at 17-37 (LIFLYFANLFGSTLSFLATII) threads the bilayer. Residues 38 to 219 (TIVFYLVKKY…PKKIDTLIFY (182 aa)) lie on the Cytoplasmic side of the membrane. Residues 83 to 166 (YSSTPISIQN…LSSSDKNNTI (84 aa)) form a disordered region. The segment covering 91-103 (QNNNNKNNNLPKQ) has biased composition (low complexity). A compositionally biased stretch (polar residues) spans 112 to 122 (INKNHNNYCNY). Low complexity predominate over residues 123–144 (STSATSSSSSSSSFSSTNSGSS). A compositionally biased stretch (polar residues) spans 145–166 (YEYQQPQKNQQTLSSSDKNNTI). A helical transmembrane segment spans residues 220–240 (LSISDFIAVSGIIIEQLIIIF). At 241 to 255 (NKEISKSIGFCIGER) the chain is on the extracellular side. A helical transmembrane segment spans residues 256–276 (VSIHFGLLATLFWSNCIAYYL). Residues 277–289 (LRETYELKPYNIR) are Cytoplasmic-facing. The helical transmembrane segment at 290–310 (FVYFHIVCWGMALIGVASLFF) threads the bilayer. Residues 311 to 334 (SKIITVSNIDQGGSWCSVSSSYQL) lie on the Extracellular side of the membrane. Residues 335-355 (YFWVIPLFVSFTWNLICYCLI) form a helical membrane-spanning segment. At 356 to 382 (YRKFNKIIGIYGIQSVQIKTIIIRKLS) the chain is on the cytoplasmic side. A helical membrane pass occupies residues 383–403 (FYLLAFLITWVWDVINNSIFL). The Extracellular portion of the chain corresponds to 404-410 (YEGKCPP). Residues 411–431 (FALWILQEFFSSGYGFFNSLA) form a helical membrane-spanning segment. Topologically, residues 432 to 442 (YAVTTRFYSRK) are cytoplasmic.

It belongs to the G-protein coupled receptor 5 family.

It is found in the membrane. In terms of biological role, receptor for cAMP. The chain is Cyclic AMP receptor-like protein B (crlB) from Dictyostelium discoideum (Social amoeba).